The primary structure comprises 173 residues: MNNNGFSTGEEDSRGPADQVCCLLDDGDRCRNQAGNASYSKRIQKTVTQRRLKLSIDTAARHIYICDFHKGRIQCARTKRRRRDSEDDSNETDTDLPEVDLYQLQVNTLRRYKRFYKVSTRPGINKAQLSETIMKHFKTIPIKEKEILTYFIYMVKSNSNKLDQKNNTSNEAT.

The Atypical zinc-finger motif lies at 21-69 (CCLLDDGDRCRNQAGNASYSKRIQKTVTQRRLKLSIDTAARHIYICDFH).

The protein belongs to the SAP30 family. In terms of assembly, component of the class 1 Sin3-histone deacetylase complex (HDAC).

The protein resides in the nucleus. Functionally, required for the function of the class 1 Sin3-histone deacetylase complex (HDAC). This Aedes aegypti (Yellowfever mosquito) protein is Histone deacetylase complex subunit SAP30 homolog.